A 175-amino-acid chain; its full sequence is MQTCCQALLLLLAACTLPAHCLEPTCLHFSELLPARLRELRVKFEEIKDYFQSRDDELNIQLLSSELLDEFKGTFGCQSVSEMLRFYTDEVLPRAMQTSTSHQQSMGDLGNMLLGLKATMRRCHRFFTCEKRSKAIKQIKETFEKMDENGIYKAMGEFDIFINYIEEYLLMRRRK.

Residues 1–21 (MQTCCQALLLLLAACTLPAHC) form the signal peptide. 2 cysteine pairs are disulfide-bonded: Cys-26/Cys-123 and Cys-77/Cys-129.

It belongs to the IL-10 family. In terms of assembly, homodimer. Interacts with IL10RA and IL10RB. As to expression, expressed predominantly in bursa of Fabricius and cecal tonsils with low levels in thymus, liver and lung.

It localises to the secreted. In terms of biological role, major immune regulatory cytokine that acts on many cells of the immune system where it has profound anti-inflammatory functions, limiting excessive tissue disruption caused by inflammation. Mechanistically, IL10 binds to its heterotetrameric receptor comprising IL10RA and IL10RB leading to JAK1 and STAT2-mediated phosphorylation of STAT3. In turn, STAT3 translocates to the nucleus where it drives expression of anti-inflammatory mediators. Targets antigen-presenting cells (APCs) such as macrophages and monocytes and inhibits their release of pro-inflammatory cytokines including granulocyte-macrophage colony-stimulating factor /GM-CSF, granulocyte colony-stimulating factor/G-CSF, IL-1 alpha, IL-1 beta, IL-6, IL-8 and TNF-alpha. Also interferes with antigen presentation by reducing the expression of MHC-class II and co-stimulatory molecules, thereby inhibiting their ability to induce T cell activation. In addition, controls the inflammatory response of macrophages by reprogramming essential metabolic pathways including mTOR signaling. This chain is Interleukin-10, found in Gallus gallus (Chicken).